An 855-amino-acid chain; its full sequence is Vomeronasal type-2 receptor 26 (855 aa).

An N-terminal signal peptide occupies residues 1–22; the sequence is MKLLTAFSPLVVLILFQEQISC. Residues 23 to 595 lie on the Extracellular side of the membrane; it reads YYLTKYASSG…FLAHEDPLGT (573 aa). N-linked (GlcNAc...) asparagine glycosylation is found at Asn-101 and Asn-295. Residues 596-616 form a helical membrane-spanning segment; sequence VLVSLAISLSAFSAMILGLFI. The Cytoplasmic segment spans residues 617–630; the sequence is CYRETPIVRANNRN. A helical transmembrane segment spans residues 631–651; sequence LSYLLLISLKLCFSCSLMFIG. At 652 to 662 the chain is on the extracellular side; the sequence is QPRTVTCVLRQ. A helical transmembrane segment spans residues 663-683; it reads IIFGIVFSIVISAILAKTFIV. The Cytoplasmic segment spans residues 684–706; that stretch reads VMAFKAIKPGSILKMGMVTRLSN. Residues 707–727 traverse the membrane as a helical segment; sequence AIVCCGSIIQVCICAVWLGTY. Residues 728-753 lie on the Extracellular side of the membrane; the sequence is PPFPDVDMHSEFGQIILWCNEGSTLA. Residues 754-774 form a helical membrane-spanning segment; sequence FYCVLGYLGFLASLSLLIAFL. The Cytoplasmic portion of the chain corresponds to 775–786; the sequence is ARRLPDSFNEAK. Residues 787 to 807 traverse the membrane as a helical segment; the sequence is TITFSMLVFCSVWISFVPAYL. Topologically, residues 808–814 are extracellular; the sequence is SSKGKTM. The chain crosses the membrane as a helical span at residues 815-835; that stretch reads VAVEILSILASSAGLLGCIFL. Topologically, residues 836-855 are cytoplasmic; the sequence is PKCYVILLKSGGHSRKKFFK.

This sequence belongs to the G-protein coupled receptor 3 family. In terms of tissue distribution, expressed in the basal epithelium of the vomeronasal organ. Located to vomeronasal sensory neurons that project their axons to six to ten glomeruli that reside in globally conserved areas within the caudal accessory olfactory bulb (AOB).

It localises to the cell membrane. Putative pheromone receptor. The protein is Vomeronasal type-2 receptor 26 (Vmn2r26) of Mus musculus (Mouse).